The primary structure comprises 394 residues: Ornithine aminotransferase 1 (394 aa).

Lysine 252 bears the N6-(pyridoxal phosphate)lysine mark.

The protein belongs to the class-III pyridoxal-phosphate-dependent aminotransferase family. OAT subfamily. The cofactor is pyridoxal 5'-phosphate.

The protein localises to the cytoplasm. It catalyses the reaction a 2-oxocarboxylate + L-ornithine = L-glutamate 5-semialdehyde + an L-alpha-amino acid. It functions in the pathway amino-acid biosynthesis; L-proline biosynthesis; L-glutamate 5-semialdehyde from L-ornithine: step 1/1. In terms of biological role, catalyzes the interconversion of ornithine to glutamate semialdehyde. The protein is Ornithine aminotransferase 1 of Staphylococcus saprophyticus subsp. saprophyticus (strain ATCC 15305 / DSM 20229 / NCIMB 8711 / NCTC 7292 / S-41).